A 134-amino-acid chain; its full sequence is Biopolymer transport protein exbD2 (134 aa).

At 1 to 17 (MRLGRRTSKQEEAQIDL) the chain is on the cytoplasmic side. Residues 18–38 (TSMLDIVFIMLIFFIVTSSFV) traverse the membrane as a helical segment. The Periplasmic segment spans residues 39-134 (RESGVEVNRP…KSIALAAEKP (96 aa)).

Belongs to the ExbD/TolR family. In terms of assembly, the accessory proteins ExbB and ExbD seem to form a complex with TonB.

The protein resides in the cell inner membrane. Involved in the TonB-dependent energy-dependent transport of various receptor-bound substrates. The protein is Biopolymer transport protein exbD2 (exbD2) of Vibrio cholerae serotype O1 (strain ATCC 39315 / El Tor Inaba N16961).